A 339-amino-acid polypeptide reads, in one-letter code: Lipoyl synthase (339 aa).

The disordered stretch occupies residues 13-35; it reads RPKLDAPARPRHPEKAHRPDTAI. Cysteine 68, cysteine 73, cysteine 79, cysteine 94, cysteine 98, cysteine 101, and serine 307 together coordinate [4Fe-4S] cluster. Residues 80 to 296 form the Radical SAM core domain; the sequence is WEKRHATFMI…ETTAYAKGFL (217 aa).

This sequence belongs to the radical SAM superfamily. Lipoyl synthase family. [4Fe-4S] cluster serves as cofactor.

Its subcellular location is the cytoplasm. The enzyme catalyses [[Fe-S] cluster scaffold protein carrying a second [4Fe-4S](2+) cluster] + N(6)-octanoyl-L-lysyl-[protein] + 2 oxidized [2Fe-2S]-[ferredoxin] + 2 S-adenosyl-L-methionine + 4 H(+) = [[Fe-S] cluster scaffold protein] + N(6)-[(R)-dihydrolipoyl]-L-lysyl-[protein] + 4 Fe(3+) + 2 hydrogen sulfide + 2 5'-deoxyadenosine + 2 L-methionine + 2 reduced [2Fe-2S]-[ferredoxin]. It participates in protein modification; protein lipoylation via endogenous pathway; protein N(6)-(lipoyl)lysine from octanoyl-[acyl-carrier-protein]: step 2/2. Its function is as follows. Catalyzes the radical-mediated insertion of two sulfur atoms into the C-6 and C-8 positions of the octanoyl moiety bound to the lipoyl domains of lipoate-dependent enzymes, thereby converting the octanoylated domains into lipoylated derivatives. The protein is Lipoyl synthase of Methylorubrum extorquens (strain CM4 / NCIMB 13688) (Methylobacterium extorquens).